The following is a 320-amino-acid chain: Olfactory receptor 7C1 (320 aa).

The Extracellular segment spans residues 1 to 25 (METGNQTHAQEFLLLGFSATSEIQF). N-linked (GlcNAc...) asparagine glycosylation occurs at Asn5. The helical transmembrane segment at 26 to 46 (ILFGLFLSMYLVTFTGNLLII) threads the bilayer. Residues 47–54 (LAICSDSH) are Cytoplasmic-facing. A helical membrane pass occupies residues 55–75 (LHTPMYFFLSNLSFADLCFTS). The Extracellular portion of the chain corresponds to 76–99 (TTVPKMLLNILTQNKFITYAGCLS). A disulfide bridge connects residues Cys97 and Cys189. The helical transmembrane segment at 100 to 120 (QIFFFTSFGCLDNLLLTVMAY) threads the bilayer. Residues 121-139 (DRFVAVCHPLHYTVIMNPQ) are Cytoplasmic-facing. A helical transmembrane segment spans residues 140–160 (LCGLLVLGSWCISVMGSLLET). At 161-197 (LTVLRLSFCTEMEIPHFFCDLLEVLKLACSDTFINNV) the chain is on the extracellular side. The helical transmembrane segment at 198-217 (VIYFATGVLGVISFTGIFFS) threads the bilayer. At 218–237 (YYKIVFSILRISSAGRKHKA) the chain is on the cytoplasmic side. The helical transmembrane segment at 238–258 (FSTCGSHLSVVTLFYGTGFGV) threads the bilayer. The Extracellular segment spans residues 259 to 271 (YLSSAATPSSRTS). A helical membrane pass occupies residues 272 to 292 (LVASVMYTMVTPMLNPFIYSL). The Cytoplasmic segment spans residues 293 to 313 (RNTDMKRALGRLLSRATFFNG).

Belongs to the G-protein coupled receptor 1 family.

The protein resides in the cell membrane. Its function is as follows. Odorant receptor. This chain is Olfactory receptor 7C1 (OR7C1), found in Homo sapiens (Human).